Consider the following 592-residue polypeptide: Aspartate--tRNA(Asp/Asn) ligase (592 aa).

Glutamate 182 provides a ligand contact to L-aspartate. The segment at 206-209 is aspartate; the sequence is QIFK. L-aspartate is bound at residue arginine 228. Residues 228-230 and glutamine 237 contribute to the ATP site; that span reads RDE. Residue histidine 455 coordinates L-aspartate. Glutamate 489 is an ATP binding site. Arginine 496 lines the L-aspartate pocket. ATP is bound at residue 541–544; sequence GLDR.

The protein belongs to the class-II aminoacyl-tRNA synthetase family. Type 1 subfamily. Homodimer.

The protein localises to the cytoplasm. The enzyme catalyses tRNA(Asx) + L-aspartate + ATP = L-aspartyl-tRNA(Asx) + AMP + diphosphate. Functionally, aspartyl-tRNA synthetase with relaxed tRNA specificity since it is able to aspartylate not only its cognate tRNA(Asp) but also tRNA(Asn). Reaction proceeds in two steps: L-aspartate is first activated by ATP to form Asp-AMP and then transferred to the acceptor end of tRNA(Asp/Asn). This Caldanaerobacter subterraneus subsp. tengcongensis (strain DSM 15242 / JCM 11007 / NBRC 100824 / MB4) (Thermoanaerobacter tengcongensis) protein is Aspartate--tRNA(Asp/Asn) ligase.